The primary structure comprises 132 residues: Small ribosomal subunit protein uS8c (132 aa).

It belongs to the universal ribosomal protein uS8 family. As to quaternary structure, part of the 30S ribosomal subunit.

It localises to the plastid. It is found in the chloroplast. One of the primary rRNA binding proteins, it binds directly to 16S rRNA central domain where it helps coordinate assembly of the platform of the 30S subunit. The sequence is that of Small ribosomal subunit protein uS8c (rps8) from Drimys granadensis.